Consider the following 144-residue polypeptide: Large ribosomal subunit protein uL16 (144 aa).

It belongs to the universal ribosomal protein uL16 family. In terms of assembly, part of the 50S ribosomal subunit.

In terms of biological role, binds 23S rRNA and is also seen to make contacts with the A and possibly P site tRNAs. The protein is Large ribosomal subunit protein uL16 of Enterococcus faecalis (strain ATCC 700802 / V583).